A 739-amino-acid chain; its full sequence is Polyribonucleotide nucleotidyltransferase (739 aa).

Asp-514 and Asp-520 together coordinate Mg(2+). The KH domain occupies 580-639; that stretch reads PRIITVKIPVDKIGEVIGPKGKMINQIQEDTGADITIEDDGTIYIGAAQGSQAEAARATI. The 73-residue stretch at 651-723 folds into the S1 motif domain; it reads GERYLGTVVK…SRGKLSLIPV (73 aa).

This sequence belongs to the polyribonucleotide nucleotidyltransferase family. Requires Mg(2+) as cofactor.

It is found in the cytoplasm. The catalysed reaction is RNA(n+1) + phosphate = RNA(n) + a ribonucleoside 5'-diphosphate. Involved in mRNA degradation. Catalyzes the phosphorolysis of single-stranded polyribonucleotides processively in the 3'- to 5'-direction. The protein is Polyribonucleotide nucleotidyltransferase of Streptomyces coelicolor (strain ATCC BAA-471 / A3(2) / M145).